The primary structure comprises 205 residues: MEVSIINVNSDKIGTIDLNPLIFSVDYRPDILKMVVNWQLSKRRAGTHKAKTIGDISGTTAKPYRQKHTGRARQGSLRSPQFRGGAVIFGPVVRNHAYSLNKKVRKLGLKVALSLKNSCNKLLILDSIDVNFVKTTQVLQFIRNFEHKSFLIIDKDYNKNVVCSCRNLHNVTLLKQIGTNVLDILRHDCIILTVGAVKYLEERLL.

Residues 56–78 are disordered; sequence ISGTTAKPYRQKHTGRARQGSLR.

The protein belongs to the universal ribosomal protein uL4 family. As to quaternary structure, part of the 50S ribosomal subunit.

Functionally, one of the primary rRNA binding proteins, this protein initially binds near the 5'-end of the 23S rRNA. It is important during the early stages of 50S assembly. It makes multiple contacts with different domains of the 23S rRNA in the assembled 50S subunit and ribosome. Its function is as follows. Forms part of the polypeptide exit tunnel. The sequence is that of Large ribosomal subunit protein uL4 from Ehrlichia canis (strain Jake).